The chain runs to 325 residues: Syntaxin-16 (325 aa).

The Cytoplasmic portion of the chain corresponds to 1–301 (MATRRLTDAF…AEQYQKKNRK (301 aa)). Serine 41 is subject to Phosphoserine. Residues 230 to 292 (TLMVEERERE…EDGLKQLHKA (63 aa)) enclose the t-SNARE coiled-coil homology domain. Residues 302-322 (MLVILILFVIIIVLIVVLVGV) form a helical; Anchor for type IV membrane protein membrane-spanning segment. At 323–325 (KSR) the chain is on the vesicular side.

Belongs to the syntaxin family. Interacts with GCC2. Interacts with BAIAP3; this interaction is increased in the presence of calcium. Ubiquitous.

It localises to the golgi apparatus membrane. The protein localises to the cytoplasm. Functionally, SNARE involved in vesicular transport from the late endosomes to the trans-Golgi network. The sequence is that of Syntaxin-16 (STX16) from Homo sapiens (Human).